A 387-amino-acid polypeptide reads, in one-letter code: Succinate--CoA ligase [ADP-forming] subunit beta (387 aa).

One can recognise an ATP-grasp domain in the interval 9 to 236 (KELFAKHNVP…RAATDPLELK (228 aa)). ATP contacts are provided by residues lysine 45, 52–54 (GRG), serine 94, and glutamate 99. 2 residues coordinate Mg(2+): asparagine 191 and aspartate 205. Substrate contacts are provided by residues asparagine 256 and 318-320 (GIT).

This sequence belongs to the succinate/malate CoA ligase beta subunit family. Heterotetramer of two alpha and two beta subunits. Mg(2+) is required as a cofactor.

It carries out the reaction succinate + ATP + CoA = succinyl-CoA + ADP + phosphate. The enzyme catalyses GTP + succinate + CoA = succinyl-CoA + GDP + phosphate. It functions in the pathway carbohydrate metabolism; tricarboxylic acid cycle; succinate from succinyl-CoA (ligase route): step 1/1. In terms of biological role, succinyl-CoA synthetase functions in the citric acid cycle (TCA), coupling the hydrolysis of succinyl-CoA to the synthesis of either ATP or GTP and thus represents the only step of substrate-level phosphorylation in the TCA. The beta subunit provides nucleotide specificity of the enzyme and binds the substrate succinate, while the binding sites for coenzyme A and phosphate are found in the alpha subunit. The sequence is that of Succinate--CoA ligase [ADP-forming] subunit beta from Mycobacterium marinum (strain ATCC BAA-535 / M).